Consider the following 292-residue polypeptide: MEYPWDDLTLAFSRTSMFPFFDIAHYLVSVMALKQRPGAVAAAWNNPLASWLSAMLHCFGGGILSCMLLAESPLKFLTNHTNILLASSIWYIVFFCPRDLVSQGYSYQPIQFLAAGMKEVTRTWKIVGGVSDANSYYRNAWIVMIVVGWARGAGGAVVTACEQLLKGDWKPEGDEWLKMSFPCKITLLGSIMFTFQHTRHLAISKHDLMFLYTIFLVTIKVTMMMTKDTAVTLTPFEDTLTRMLFGRRQQQQFSSSEKKTEVKPSSNGSASSASKRGAEPSGGAKRHAKKED.

At 1 to 16 the chain is on the lumenal side; the sequence is MEYPWDDLTLAFSRTS. Residues 17–34 form a helical membrane-spanning segment; that stretch reads MFPFFDIAHYLVSVMALK. The Cytoplasmic portion of the chain corresponds to 35 to 47; the sequence is QRPGAVAAAWNNP. A helical membrane pass occupies residues 48 to 69; sequence LASWLSAMLHCFGGGILSCMLL. Over 70-82 the chain is Lumenal; it reads AESPLKFLTNHTN. A helical transmembrane segment spans residues 83 to 100; sequence ILLASSIWYIVFFCPRDL. The Cytoplasmic portion of the chain corresponds to 101–103; that stretch reads VSQ. Residues 104–122 form a helical membrane-spanning segment; it reads GYSYQPIQFLAAGMKEVTR. Residues K118 and R122 each contribute to the a 1,2-diacyl-sn-glycero-3-phospho-(1D-myo-inositol-4,5-bisphosphate) site. Residues 123–140 are Lumenal-facing; it reads TWKIVGGVSDANSYYRNA. A helical membrane pass occupies residues 141–158; sequence WIVMIVVGWARGAGGAVV. Residues 159–178 lie on the Cytoplasmic side of the membrane; that stretch reads TACEQLLKGDWKPEGDEWLK. A helical transmembrane segment spans residues 179–195; that stretch reads MSFPCKITLLGSIMFTF. The Lumenal portion of the chain corresponds to 196–206; it reads QHTRHLAISKH. Residues 207 to 225 traverse the membrane as a helical segment; that stretch reads DLMFLYTIFLVTIKVTMMM. At 226–292 the chain is on the cytoplasmic side; it reads TKDTAVTLTP…GAKRHAKKED (67 aa). The tract at residues 248–292 is disordered; the sequence is RQQQQFSSSEKKTEVKPSSNGSASSASKRGAEPSGGAKRHAKKED. The segment covering 265 to 274 has biased composition (low complexity); it reads SSNGSASSAS.

Belongs to the TMEM38 family. In terms of assembly, homotrimer; conformation seems to be controled by binding to diacylglycerol (DAG). As to expression, widely expressed.

It is found in the endoplasmic reticulum membrane. The enzyme catalyses K(+)(in) = K(+)(out). With respect to regulation, channel activity is activated by increased cytosolic Ca(2+) levels and blocked by luminal high Ca(2+) levels. Intracellular monovalent cation channel required for maintenance of rapid intracellular calcium release. Acts as a potassium counter-ion channel that functions in synchronization with calcium release from intracellular stores. Activated by increased cytosolic Ca(2+) levels. The protein is Trimeric intracellular cation channel type B (Tmem38b) of Mus musculus (Mouse).